The chain runs to 507 residues: ATP synthase subunit alpha, chloroplastic (507 aa).

Gly170 to Thr177 serves as a coordination point for ATP. Phosphothreonine is present on Thr257.

Belongs to the ATPase alpha/beta chains family. F-type ATPases have 2 components, CF(1) - the catalytic core - and CF(0) - the membrane proton channel. CF(1) has five subunits: alpha(3), beta(3), gamma(1), delta(1), epsilon(1). CF(0) has four main subunits: a, b, b' and c.

The protein localises to the plastid. Its subcellular location is the chloroplast thylakoid membrane. It carries out the reaction ATP + H2O + 4 H(+)(in) = ADP + phosphate + 5 H(+)(out). Its function is as follows. Produces ATP from ADP in the presence of a proton gradient across the membrane. The alpha chain is a regulatory subunit. This chain is ATP synthase subunit alpha, chloroplastic, found in Lepidium virginicum (Virginia pepperweed).